The chain runs to 346 residues: NADH-ubiquinone oxidoreductase chain 2 (346 aa).

Transmembrane regions (helical) follow at residues 3 to 23, 25 to 45, 59 to 79, 96 to 116, 122 to 142, 149 to 169, 178 to 198, 200 to 220, 237 to 257, 274 to 294, and 322 to 342; these read PLIL…VMAS, HWLM…PILM, YFLT…INLM, IIMT…FWVP, ISLT…MSIL, INLN…GWGG, IMAY…VYNP, LTML…MLFI, APLI…LPPL, SSII…YFYM, and ITLL…TPML.

It belongs to the complex I subunit 2 family. As to quaternary structure, core subunit of respiratory chain NADH dehydrogenase (Complex I) which is composed of 45 different subunits. Interacts with TMEM242.

The protein resides in the mitochondrion inner membrane. The catalysed reaction is a ubiquinone + NADH + 5 H(+)(in) = a ubiquinol + NAD(+) + 4 H(+)(out). Its function is as follows. Core subunit of the mitochondrial membrane respiratory chain NADH dehydrogenase (Complex I) which catalyzes electron transfer from NADH through the respiratory chain, using ubiquinone as an electron acceptor. Essential for the catalytic activity and assembly of complex I. The chain is NADH-ubiquinone oxidoreductase chain 2 from Equus asinus (Donkey).